A 549-amino-acid polypeptide reads, in one-letter code: SH3 domain-containing protein 21 (549 aa).

Positions 1–56 are disordered; the sequence is MVQSELQLQPRAGRRADASNWGDFGSDKGGLGNTDIPPITPNSQRPPKLSNLTYDS. Positions 41–54 are enriched in polar residues; that stretch reads PNSQRPPKLSNLTY. Residues 65-126 enclose the SH3 domain; the sequence is SCPETCRVLF…PDNFVIPPPP (62 aa). 2 disordered regions span residues 142 to 303 and 332 to 479; these read PIKE…KPAK and FKKE…KSKN. Residues 211–220 show a composition bias toward low complexity; the sequence is QASQQHSASS. 2 stretches are compositionally biased toward basic and acidic residues: residues 267–280 and 332–342; these read PVPK…KIPA and FKKEPSRDNDQ. Composition is skewed to polar residues over residues 343-365 and 439-456; these read CQHL…NNIQ and VLPQ…TIQQ. Positions 482–510 form a coiled coil; the sequence is MDVLESLKEEVGLLRSRLELLELKLEQKM. The interval 528–549 is disordered; it reads QMMQRNRKSFKHAETQTETQTE.

The protein is SH3 domain-containing protein 21 (Sh3d21) of Mus musculus (Mouse).